A 64-amino-acid chain; its full sequence is Prokaryotic ubiquitin-like protein Pup (64 aa).

The tract at residues Met-1 to Asp-37 is disordered. Residues Gly-21 to Tyr-58 form an ARC ATPase binding region. The stretch at Ala-24–Glu-52 forms a coiled coil. Gln-64 is subject to Deamidated glutamine. Residue Gln-64 forms an Isoglutamyl lysine isopeptide (Gln-Lys) (interchain with K-? in acceptor proteins) linkage.

This sequence belongs to the prokaryotic ubiquitin-like protein family. Strongly interacts with the proteasome-associated ATPase ARC through a hydrophobic interface; the interacting region of Pup lies in its C-terminal half. There is one Pup binding site per ARC hexamer ring. In terms of processing, is modified by deamidation of its C-terminal glutamine to glutamate by the deamidase Dop, a prerequisite to the subsequent pupylation process.

The protein operates within protein degradation; proteasomal Pup-dependent pathway. Functionally, protein modifier that is covalently attached to lysine residues of substrate proteins, thereby targeting them for proteasomal degradation. The tagging system is termed pupylation. This Mycobacterium sp. (strain JLS) protein is Prokaryotic ubiquitin-like protein Pup.